We begin with the raw amino-acid sequence, 475 residues long: MTPGTQSLFFLLLLLTVLTVVTGSGHASSTPGGEKETSATQRSSMPSSTEKKVVSMTSSVLSSHSPGSGSSTTQGQDVSLAPATEPASGSAATWGQDVTSVPVTRPAPGSTTSPAQDVTSAPDTRPALGSTAPPVHGVTSAPDTRPTLGSTAPPVHGVTSAPDTRPTLGSTAPPVHNVTSASGSASGSASTLVHNGTSARATTTPASKSTPFSIPSHHSDTPTTLTSHSTKTDASSTHHSTVSPLTSSNHSTSPQLSIGVSFFFLSFHISNLQFNSSLEDPSTNYYQELQRDISELILQIYKQGDFLGVSNIKFRPGSVVVQSTLAFREGTTNVHDVEAQFNQHKTEAASRYNLTISDVSVSDVPFPFSAQSGAGVPGWGIALLVLVCVLVALAIVYLIALAVCQCRRKNYGQLDIFPARDAYHPMSEYPTYHTHGRYVPPSSTNRSPYEKVSEGNGGSSLSYTNPAVAATSANL.

The signal sequence occupies residues M1–G23. The tract at residues G23–T252 is disordered. The Extracellular portion of the chain corresponds to S24 to G380. The span at S38 to S48 shows a compositional bias: polar residues. Residues V54–G75 show a composition bias toward low complexity. A run of 5 repeats spans residues P86–R105, P106–R125, P126–R145, P146–R165, and P166–A185. Residues P86–A185 form a 5 X 20 AA approximate tandem repeats region. Residues S90–P102 show a composition bias toward polar residues. T93 and T99 each carry an O-linked (GalNAc...) threonine glycan. O-linked (GalNAc...) serine glycosylation occurs at S100. Residue T104 is glycosylated (O-linked (GalNAc...) threonine). Residues G109–P122 are compositionally biased toward polar residues. N-linked (GlcNAc...) asparagine glycosylation occurs at N177. The span at S180–S190 shows a compositional bias: low complexity. Composition is skewed to polar residues over residues T191–S213 and D233–T252. Residues N195, N249, N275, and N353 are each glycosylated (N-linked (GlcNAc...) asparagine). Residues G259–F368 enclose the SEA domain. The chain crosses the membrane as a helical span at residues I381 to L401. Over A402–L475 the chain is Cytoplasmic. Residues C404 and C406 are each lipidated (S-palmitoyl cysteine). The tract at residues G412 to P448 is interaction with P53. A Phosphotyrosine; by PDGFR modification is found at Y423. Positions Y423–M426 match the Interaction with GRB2 motif. Phosphotyrosine is present on Y432. A disordered region spans residues H435–S460. Phosphotyrosine; by PDGFR is present on Y438. A required for interaction with GSK3B region spans residues S443 to E450. T444 bears the Phosphothreonine; by PKC/PRKCD mark. S447 is subject to Phosphoserine; by GSK3-beta. Y449 carries the phosphotyrosine; by CSK, EGFR and SRC modification. The Interaction with SRC and ESR1 motif lies at Y449–V452. A required for interaction with beta- and gamma-catenins region spans residues S453–L461. Residue Y463 is modified to Phosphotyrosine. A Required for interaction with AP1S2 motif is present at residues Y463 to P466.

In terms of assembly, the alpha subunit forms a tight, non-covalent heterodimeric complex with the proteolytically-released beta-subunit. Binds directly the SH2 domain of GRB2, and forms a MUC1/GRB2/SOS1 complex involved in RAS signaling. The cytoplasmic tail (MUC1CT) interacts with several proteins such as SRC, CTNNB1 and ERBs. Interaction with the SH2 domain of CSK decreases interaction with GSK3B. Interacts with CTNNB1/beta-catenin and JUP/gamma-catenin and promotes cell adhesion. Interaction with JUP/gamma-catenin is induced by heregulin. Binds PRKCD, ERBB2, ERBB3 and ERBB4. Heregulin (HRG) stimulates the interaction with ERBB2 and, to a much lesser extent, the interaction with ERBB3 and ERBB4. Interacts with P53 in response to DNA damage. Interacts with KLF4. Interacts with estrogen receptor alpha/ESR1, through its DNA-binding domain, and stimulates its transcription activity. Binds ADAM17. Post-translationally, probably both N- and O-glycosylated (in repeat region). In terms of processing, proteolytic cleavage in the SEA domain occurs in the endoplasmic reticulum by an autoproteolytic mechanism and requires the full-length SEA domain as well as requiring a Ser, Thr or Cys residue at the P + 1 site. Ectodomain shedding is mediated by ADAM17 in uterine epithelial cells. Dual palmitoylation on cysteine residues in the CQC motif is required for recycling from endosomes back to the plasma membrane. Post-translationally, phosphorylated on tyrosines and serine residues in the C-terminal. Phosphorylation on tyrosines in the C-terminal increases the nuclear location of MUC1 and beta-catenin. Phosphorylation by PKC delta induces binding of MUC1 to beta-catenin/CTNNB1 and thus decreases the formation of the beta-catenin/E-cadherin complex. Src-mediated phosphorylation inhibits interaction with GSK3B. Csk- or Src- or EGFR-mediated phosphorylation on Tyr-449 increases binding to beta-catenin/CTNNB1. GSK3B-mediated phosphorylation on Ser-447 decreases this interaction but restores the formation of the beta-cadherin/E-cadherin complex. On T-cell receptor activation, phosphorylated by LCK. PDGFR-mediated phosphorylation increases nuclear colocalization of MUC1CT and CTNNB1.

It is found in the apical cell membrane. The protein resides in the cell membrane. Its subcellular location is the cytoplasm. It localises to the nucleus. The alpha subunit has cell adhesive properties. Can act both as an adhesion and an anti-adhesion protein. May provide a protective layer on epithelial cells against bacterial and enzyme attack. Its function is as follows. The beta subunit contains a C-terminal domain which is involved in cell signaling, through phosphorylations and protein-protein interactions. Modulates signaling in ERK, Src and NF-kappaB pathways. In activated T-cells, influences directly or indirectly the Ras/MAPK pathway. Promotes tumor progression. Regulates P53-mediated transcription and determines cell fate in the genotoxic stress response. Binds, together with KLF4, the PE21 promoter element of P53 and represses P53 activity. In Hylobates lar (Lar gibbon), this protein is Mucin-1 (MUC1).